A 203-amino-acid polypeptide reads, in one-letter code: Reticulon-like protein B12 (203 aa).

The 180-residue stretch at 24 to 203 folds into the Reticulon domain; the sequence is VADVMLWRKK…WANPENKKLS (180 aa). 3 helical membrane passes run 34 to 54, 55 to 75, and 132 to 152; these read NVSV…EAFA, YTIF…LFLW, and VAVS…QTLC.

Its subcellular location is the endoplasmic reticulum membrane. The protein is Reticulon-like protein B12 (RTNLB12) of Arabidopsis thaliana (Mouse-ear cress).